The following is a 267-amino-acid chain: Ribosomal RNA small subunit methyltransferase A (267 aa).

Residues asparagine 18, leucine 20, glycine 45, glutamate 66, aspartate 91, and asparagine 112 each coordinate S-adenosyl-L-methionine.

This sequence belongs to the class I-like SAM-binding methyltransferase superfamily. rRNA adenine N(6)-methyltransferase family. RsmA subfamily.

Its subcellular location is the cytoplasm. It carries out the reaction adenosine(1518)/adenosine(1519) in 16S rRNA + 4 S-adenosyl-L-methionine = N(6)-dimethyladenosine(1518)/N(6)-dimethyladenosine(1519) in 16S rRNA + 4 S-adenosyl-L-homocysteine + 4 H(+). Functionally, specifically dimethylates two adjacent adenosines (A1518 and A1519) in the loop of a conserved hairpin near the 3'-end of 16S rRNA in the 30S particle. May play a critical role in biogenesis of 30S subunits. In Shewanella amazonensis (strain ATCC BAA-1098 / SB2B), this protein is Ribosomal RNA small subunit methyltransferase A.